A 481-amino-acid polypeptide reads, in one-letter code: MLLSAPLRHLPGLLLLLWPLLLLPSLAAPGRLARASVRRLGTRVPGGSPGHLSALATSTRAPYSGGRGAGVCKSRPLDLVFIIDSSRSVRPLEFTKVKTFVSRIIDTLDIGATDTRVAVVNYASTVKIEFQLNTYSDKQALKQAVARITPLSTGTMSGLAIQTAMEEAFTVEAGARGPMSNIPKVAIIVTDGRPQDQVNEVAARARASGIELYAVGVDRADMESLKMMASKPLEEHVFYVETYGVIEKLSARFQETFCALDQCMLGTHQCQHVCVSDGDGKHHCECSQGYTLNADGKTCSAIDKCALSTHGCEQICVNDRNGSYHCECYGGYALNADRRTCAALDKCASGTHGCQHICVNDGAGSHHCECFEGYTLNADKKTCSVRNKCALGTHGCQHICVSDGAVAYHCDCFPGYTLNDDKKTCSDIEEARSLISIEDACGCGATLAFQEKVSSHLQKLNTKLDNILKKLKVTEYGQVHR.

Residues 1 to 27 form the signal peptide; the sequence is MLLSAPLRHLPGLLLLLWPLLLLPSLA. One can recognise a VWFA domain in the interval 78 to 253; sequence DLVFIIDSSR…GVIEKLSARF (176 aa). Arg193 is subject to Omega-N-methylarginine. 4 EGF-like domains span residues 259–300, 301–342, 343–384, and 385–426; these read ALDQ…KTCS, AIDK…RTCA, ALDK…KTCS, and VRNK…KTCS. 12 disulfides stabilise this stretch: Cys263–Cys274, Cys270–Cys284, Cys286–Cys299, Cys305–Cys316, Cys312–Cys326, Cys328–Cys341, Cys347–Cys358, Cys354–Cys368, Cys370–Cys383, Cys389–Cys400, Cys396–Cys410, and Cys412–Cys425. Asn321 carries an N-linked (GlcNAc...) asparagine glycan. Residue Ser436 is modified to Phosphoserine; by FAM20C. Positions 451–475 form a coiled coil; that stretch reads EKVSSHLQKLNTKLDNILKKLKVTE.

Can form homooligomers (monomers, dimers, trimers and tetramers) and heterooligomers with matrilin-1. Interacts with COMP. Component of a complex containing at least CRELD2, MANF, MATN3 and PDIA4. In terms of tissue distribution, strongly expressed in growing skeletal tissue such as epiphyseal growth plate or in bone undergoing growth and remodeling. In the bone, actively synthesized in osteoblasts and osteocytes. Expressed in cartilage of sternum, femur, vertebrae, trachea, articular and epiphyseal cartilage, cartilage of developing bones and bones.

Its subcellular location is the secreted. Major component of the extracellular matrix of cartilage and may play a role in the formation of extracellular filamentous networks. In Mus musculus (Mouse), this protein is Matrilin-3 (Matn3).